The following is a 274-amino-acid chain: Guanylyl cyclase 1 (274 aa).

In terms of assembly, functions both as monomer and homooligomer. The cofactor is Mg(2+).

The catalysed reaction is GTP = 3',5'-cyclic GMP + diphosphate. Its pathway is nucleotide metabolism. Magnesium-dependent guanylyl cyclase that catalyzes the formation of guanosine 3',5'-cyclic monophosphate (cGMP) from guanosine 5'-triphosphate (GTP). Can also use ATP as substrate with a low activity. This is Guanylyl cyclase 1 from Arabidopsis thaliana (Mouse-ear cress).